Reading from the N-terminus, the 454-residue chain is Guanine deaminase (454 aa).

Zn(2+) is bound by residues His-82 and His-84. Residues 84 to 87 (HAPQ), 213 to 214 (RF), 240 to 243 (HISE), and Asp-330 contribute to the substrate site. Residues His-240 and Asp-330 each coordinate Zn(2+). Ser-453 is subject to Phosphoserine.

This sequence belongs to the metallo-dependent hydrolases superfamily. ATZ/TRZ family. In terms of assembly, homodimer. The cofactor is Zn(2+).

The enzyme catalyses guanine + H2O + H(+) = xanthine + NH4(+). Its pathway is purine metabolism; guanine degradation; xanthine from guanine: step 1/1. In terms of biological role, catalyzes the hydrolytic deamination of guanine, producing xanthine and ammonia. The protein is Guanine deaminase of Mus musculus (Mouse).